We begin with the raw amino-acid sequence, 422 residues long: UDP-N-acetylglucosamine 1-carboxyvinyltransferase (422 aa).

22 to 23 (KN) serves as a coordination point for phosphoenolpyruvate. Residue Arg-94 coordinates UDP-N-acetyl-alpha-D-glucosamine. Cys-118 functions as the Proton donor in the catalytic mechanism. A 2-(S-cysteinyl)pyruvic acid O-phosphothioketal modification is found at Cys-118. Residues 123–127 (RPVDL), Asp-309, and Ile-331 contribute to the UDP-N-acetyl-alpha-D-glucosamine site.

It belongs to the EPSP synthase family. MurA subfamily.

It is found in the cytoplasm. The enzyme catalyses phosphoenolpyruvate + UDP-N-acetyl-alpha-D-glucosamine = UDP-N-acetyl-3-O-(1-carboxyvinyl)-alpha-D-glucosamine + phosphate. It participates in cell wall biogenesis; peptidoglycan biosynthesis. Functionally, cell wall formation. Adds enolpyruvyl to UDP-N-acetylglucosamine. The chain is UDP-N-acetylglucosamine 1-carboxyvinyltransferase from Cereibacter sphaeroides (strain ATCC 17025 / ATH 2.4.3) (Rhodobacter sphaeroides).